We begin with the raw amino-acid sequence, 357 residues long: DNA integrity scanning protein DisA (357 aa).

One can recognise a DAC domain in the interval 3 to 141 (RPTLRETVAR…GGERHVVADS (139 aa)). ATP-binding positions include Gly-70, Leu-88, and 101–105 (TRHRS).

Belongs to the DisA family. As to quaternary structure, homooctamer. Mg(2+) is required as a cofactor.

It carries out the reaction 2 ATP = 3',3'-c-di-AMP + 2 diphosphate. Participates in a DNA-damage check-point. DisA forms globular foci that rapidly scan along the chromosomes searching for lesions. Functionally, also has diadenylate cyclase activity, catalyzing the condensation of 2 ATP molecules into cyclic di-AMP (c-di-AMP). c-di-AMP likely acts as a signaling molecule that may couple DNA integrity with a cellular process. The chain is DNA integrity scanning protein DisA from Mycobacterium avium (strain 104).